Consider the following 217-residue polypeptide: Octanoyltransferase (217 aa).

Residues 32-207 (DDSADEIWLV…HMIKKLNATQ (176 aa)) form the BPL/LPL catalytic domain. Substrate-binding positions include 71–78 (RGGQVTYH), 138–140 (SLG), and 151–153 (GLA). Cysteine 169 (acyl-thioester intermediate) is an active-site residue.

It belongs to the LipB family.

It is found in the cytoplasm. The catalysed reaction is octanoyl-[ACP] + L-lysyl-[protein] = N(6)-octanoyl-L-lysyl-[protein] + holo-[ACP] + H(+). Its pathway is protein modification; protein lipoylation via endogenous pathway; protein N(6)-(lipoyl)lysine from octanoyl-[acyl-carrier-protein]: step 1/2. Catalyzes the transfer of endogenously produced octanoic acid from octanoyl-acyl-carrier-protein onto the lipoyl domains of lipoate-dependent enzymes. Lipoyl-ACP can also act as a substrate although octanoyl-ACP is likely to be the physiological substrate. This Pseudoalteromonas translucida (strain TAC 125) protein is Octanoyltransferase.